The chain runs to 36 residues: Pancreatic polypeptide (36 aa).

Tyrosine 36 bears the Tyrosine amide mark.

It belongs to the NPY family.

The protein resides in the secreted. Hormone secreted by pancreatic cells that acts as a regulator of pancreatic and gastrointestinal functions probably by signaling through the G protein-coupled receptor NPY4R2. In Chinchilla chinchilla (Short-tailed chinchilla), this protein is Pancreatic polypeptide (PPY).